The chain runs to 239 residues: Purine nucleoside phosphorylase DeoD-type (239 aa).

Residue histidine 5 participates in a purine D-ribonucleoside binding. Phosphate is bound by residues glycine 21, arginine 25, arginine 44, and 88 to 91 (RVGS). Residues 180-182 (EME) and 204-205 (SD) each bind a purine D-ribonucleoside. The Proton donor role is filled by aspartate 205.

The protein belongs to the PNP/UDP phosphorylase family. As to quaternary structure, homohexamer; trimer of homodimers.

It carries out the reaction a purine D-ribonucleoside + phosphate = a purine nucleobase + alpha-D-ribose 1-phosphate. The catalysed reaction is a purine 2'-deoxy-D-ribonucleoside + phosphate = a purine nucleobase + 2-deoxy-alpha-D-ribose 1-phosphate. Its function is as follows. Catalyzes the reversible phosphorolytic breakdown of the N-glycosidic bond in the beta-(deoxy)ribonucleoside molecules, with the formation of the corresponding free purine bases and pentose-1-phosphate. The protein is Purine nucleoside phosphorylase DeoD-type of Salmonella arizonae (strain ATCC BAA-731 / CDC346-86 / RSK2980).